The sequence spans 131 residues: Insulin-like 3 (131 aa).

A signal peptide spans 1–24 (MDPRLPAWALVLLGPALVFALGPA). 3 cysteine pairs are disulfide-bonded: Cys-34/Cys-117, Cys-46/Cys-130, and Cys-116/Cys-121. A propeptide spans 58–104 (PVAAGDGELLQWLERRHLLYGLVANSEPAPGGPGLQPMPQTSHHHRH) (c peptide like). The interval 86 to 105 (APGGPGLQPMPQTSHHHRHR) is disordered.

It belongs to the insulin family. Heterodimer of a B chain and an A chain linked by two disulfide bonds. In terms of tissue distribution, highest expression in the Leydig cells of the testis.

Its subcellular location is the secreted. In terms of biological role, seems to play a role in testicular function. May be a trophic hormone with a role in testicular descent in fetal life. Is a ligand for LGR8 receptor. The protein is Insulin-like 3 (INSL3) of Callithrix jacchus (White-tufted-ear marmoset).